The primary structure comprises 386 residues: Acetylornithine aminotransferase (386 aa).

Residues 94-95 (GT) and phenylalanine 121 contribute to the pyridoxal 5'-phosphate site. Residue arginine 124 participates in N(2)-acetyl-L-ornithine binding. 206 to 209 (DEVQ) is a binding site for pyridoxal 5'-phosphate. Lysine 235 carries the N6-(pyridoxal phosphate)lysine modification. A N(2)-acetyl-L-ornithine-binding site is contributed by serine 263. Residue threonine 264 coordinates pyridoxal 5'-phosphate.

It belongs to the class-III pyridoxal-phosphate-dependent aminotransferase family. ArgD subfamily. Homodimer. Pyridoxal 5'-phosphate is required as a cofactor.

The protein localises to the cytoplasm. The enzyme catalyses N(2)-acetyl-L-ornithine + 2-oxoglutarate = N-acetyl-L-glutamate 5-semialdehyde + L-glutamate. It participates in amino-acid biosynthesis; L-arginine biosynthesis; N(2)-acetyl-L-ornithine from L-glutamate: step 4/4. The sequence is that of Acetylornithine aminotransferase from Listeria monocytogenes serovar 1/2a (strain ATCC BAA-679 / EGD-e).